A 342-amino-acid polypeptide reads, in one-letter code: Holliday junction branch migration complex subunit RuvB (342 aa).

A large ATPase domain (RuvB-L) region spans residues 1 to 184 (MEENFDIREQ…FGINLHLEYY (184 aa)). Residues L23, R24, G65, K68, T69, T70, 131–133 (EDY), R174, Y184, and R221 each bind ATP. Mg(2+) is bound at residue T69. Residues 185 to 255 (DDDVLTSIIR…IARFALEALN (71 aa)) form a small ATPAse domain (RuvB-S) region. The segment at 258 to 342 (RYGLDEIDNK…YNSQKTLFDD (85 aa)) is head domain (RuvB-H). Residues R313 and R318 each coordinate DNA.

The protein belongs to the RuvB family. In terms of assembly, homohexamer. Forms an RuvA(8)-RuvB(12)-Holliday junction (HJ) complex. HJ DNA is sandwiched between 2 RuvA tetramers; dsDNA enters through RuvA and exits via RuvB. An RuvB hexamer assembles on each DNA strand where it exits the tetramer. Each RuvB hexamer is contacted by two RuvA subunits (via domain III) on 2 adjacent RuvB subunits; this complex drives branch migration. In the full resolvosome a probable DNA-RuvA(4)-RuvB(12)-RuvC(2) complex forms which resolves the HJ.

It is found in the cytoplasm. It carries out the reaction ATP + H2O = ADP + phosphate + H(+). Its function is as follows. The RuvA-RuvB-RuvC complex processes Holliday junction (HJ) DNA during genetic recombination and DNA repair, while the RuvA-RuvB complex plays an important role in the rescue of blocked DNA replication forks via replication fork reversal (RFR). RuvA specifically binds to HJ cruciform DNA, conferring on it an open structure. The RuvB hexamer acts as an ATP-dependent pump, pulling dsDNA into and through the RuvAB complex. RuvB forms 2 homohexamers on either side of HJ DNA bound by 1 or 2 RuvA tetramers; 4 subunits per hexamer contact DNA at a time. Coordinated motions by a converter formed by DNA-disengaged RuvB subunits stimulates ATP hydrolysis and nucleotide exchange. Immobilization of the converter enables RuvB to convert the ATP-contained energy into a lever motion, pulling 2 nucleotides of DNA out of the RuvA tetramer per ATP hydrolyzed, thus driving DNA branch migration. The RuvB motors rotate together with the DNA substrate, which together with the progressing nucleotide cycle form the mechanistic basis for DNA recombination by continuous HJ branch migration. Branch migration allows RuvC to scan DNA until it finds its consensus sequence, where it cleaves and resolves cruciform DNA. The protein is Holliday junction branch migration complex subunit RuvB of Phocaeicola vulgatus (strain ATCC 8482 / DSM 1447 / JCM 5826 / CCUG 4940 / NBRC 14291 / NCTC 11154) (Bacteroides vulgatus).